A 147-amino-acid polypeptide reads, in one-letter code: Small ribosomal subunit protein uS9 (147 aa).

The tract at residues 128–147 is disordered; that stretch reads KERKKYGQMGARAKYRWSKR.

The protein belongs to the universal ribosomal protein uS9 family.

This Aquifex aeolicus (strain VF5) protein is Small ribosomal subunit protein uS9 (rpsI).